The primary structure comprises 236 residues: Leucyl/phenylalanyl-tRNA--protein transferase (236 aa).

This sequence belongs to the L/F-transferase family.

It is found in the cytoplasm. It carries out the reaction N-terminal L-lysyl-[protein] + L-leucyl-tRNA(Leu) = N-terminal L-leucyl-L-lysyl-[protein] + tRNA(Leu) + H(+). The catalysed reaction is N-terminal L-arginyl-[protein] + L-leucyl-tRNA(Leu) = N-terminal L-leucyl-L-arginyl-[protein] + tRNA(Leu) + H(+). It catalyses the reaction L-phenylalanyl-tRNA(Phe) + an N-terminal L-alpha-aminoacyl-[protein] = an N-terminal L-phenylalanyl-L-alpha-aminoacyl-[protein] + tRNA(Phe). Functions in the N-end rule pathway of protein degradation where it conjugates Leu, Phe and, less efficiently, Met from aminoacyl-tRNAs to the N-termini of proteins containing an N-terminal arginine or lysine. This chain is Leucyl/phenylalanyl-tRNA--protein transferase, found in Aliivibrio salmonicida (strain LFI1238) (Vibrio salmonicida (strain LFI1238)).